The chain runs to 345 residues: Membrane progestin receptor gamma-A (345 aa).

At 1-52 (MLNLIKLPQVFTINQVPKVFHEDGIISGYRHPCSSAKDCVLSLFQLTNETLN) the chain is on the cytoplasmic side. A helical membrane pass occupies residues 53 to 73 (IWTHFLPTWFFLWKLLTVVLV). The Extracellular segment spans residues 74–80 (LEDWRDP). The chain crosses the membrane as a helical span at residues 81 to 101 (FIWPFLVFLLSCCVYPLASSC). Over 102–114 (AHTFSTMSERARH) the chain is Cytoplasmic. The helical transmembrane segment at 115–135 (ICFFFDYGALSFYSLGSAIIY) threads the bilayer. The Extracellular portion of the chain corresponds to 136–148 (SSYSFPDKWVNGT). A helical transmembrane segment spans residues 149 to 169 (FHLNYVSIAVVNSIISTALAC). Residues 170 to 201 (YSRLGLPFLEYNCHSIKRPSGKLDQKLCKCLR) are Cytoplasmic-facing. Residues 202-222 (IIAFVYPYLFDNIPLFYRIFV) traverse the membrane as a helical segment. The Extracellular segment spans residues 223-272 (CAGEGCTVNEANTVHYQHTSLAFFTGFLFATHLPERLAPGSFDYIGHSHQ). A helical transmembrane segment spans residues 273–293 (LFHVFAIIGTYFQMTAIELDM). Topologically, residues 294–314 (AARKQWLHAHLPPVTFLNTVG) are cytoplasmic. The chain crosses the membrane as a helical span at residues 315–335 (AAFFSVVSGLCIVYVFSLSLF). Topologically, residues 336–345 (STRGVKNKSF) are extracellular.

It belongs to the ADIPOR family.

The protein resides in the membrane. Functionally, steroid membrane receptor. Binds progesterone. May be involved in oocyte maturation. The sequence is that of Membrane progestin receptor gamma-A (paqr5a) from Danio rerio (Zebrafish).